The chain runs to 116 residues: Large ribosomal subunit protein bL20 (116 aa).

It belongs to the bacterial ribosomal protein bL20 family.

Functionally, binds directly to 23S ribosomal RNA and is necessary for the in vitro assembly process of the 50S ribosomal subunit. It is not involved in the protein synthesizing functions of that subunit. This Thermosynechococcus vestitus (strain NIES-2133 / IAM M-273 / BP-1) protein is Large ribosomal subunit protein bL20.